The primary structure comprises 530 residues: White collar 2 protein (530 aa).

Tandem repeats lie at residues 9–12, 21–24, 25–28, 29–32, 33–36, 37–40, and 41–44. The 7 X 4 AA repeats of G-[SAT]-G-M stretch occupies residues 9 to 44; the sequence is GSSMYGFGAMGMGSGMGSGMGSGMGTGMGTGMGTGM. Residues 134-158 form a disordered region; that stretch reads IATPTTTTSGPSGGPSSGGGSTLTE. Residues 144–154 are compositionally biased toward gly residues; it reads PSGGPSSGGGS. A PAS domain is found at 162 to 232; it reads RRNWPAKVVE…AELNEAIATG (71 aa). A disordered region spans residues 315-343; the sequence is REEQEEQEESHRTWRMSQEGRSDVTPSDD. Residues 468–493 form a GATA-type zinc finger; it reads CTDCGTLDSPEWRKGPSGPKTLCNAC. The disordered stretch occupies residues 504–530; sequence KNANNNNNGGGIGGHNDIHTPMGDHMG.

Heterodimer of wc-1 and wc-2 (Potential). Binds to DNA.

It is found in the nucleus. Its function is as follows. May function as a transcription factor involved in light regulation. Binds and affects blue light regulation of the al-3 gene. Wc-1 and wc-2 interact via homologous PAS domains, bind to promoters of light regulated genes such as frq, and activate transcription. May bind directly to frq. The sequence is that of White collar 2 protein (wc-2) from Neurospora crassa (strain ATCC 24698 / 74-OR23-1A / CBS 708.71 / DSM 1257 / FGSC 987).